The sequence spans 619 residues: Chaperone protein HscA homolog (619 aa).

Belongs to the heat shock protein 70 family.

In terms of biological role, chaperone involved in the maturation of iron-sulfur cluster-containing proteins. Has a low intrinsic ATPase activity which is markedly stimulated by HscB. The sequence is that of Chaperone protein HscA homolog from Azotobacter vinelandii.